We begin with the raw amino-acid sequence, 332 residues long: MRAPDFWWRDPPSLPARLLAPVGALYGAAAARRMARPGAPAPCPVVCVGNVTLGGAGKTPTALALAALLRELGARPAFLSRGYGGSLPGPLRVDPAAHGAAEVGDEPLLIARAAPTIVARDRPAGAAACAAAGADVIVMDDGLQNPSLRKDWSLAVFDAGVGIGNGLPFPAGPLRAPLGAQWPLVSAVLVIGDAAQGRPLLAAAAARGLPALRGRLAPDAAAAAALRGRPVLAFAGIGRPDKFFESLRAVGAELRGTRAFPDHHAYRAGEIAALEREATRRGLTLVTTEKDRVRLPAAMAVAVLPVRLALAPDDAALLRARLAALLRGRAGP.

52 to 59 (TLGGAGKT) is an ATP binding site.

The protein belongs to the LpxK family.

The enzyme catalyses a lipid A disaccharide + ATP = a lipid IVA + ADP + H(+). The protein operates within glycolipid biosynthesis; lipid IV(A) biosynthesis; lipid IV(A) from (3R)-3-hydroxytetradecanoyl-[acyl-carrier-protein] and UDP-N-acetyl-alpha-D-glucosamine: step 6/6. Transfers the gamma-phosphate of ATP to the 4'-position of a tetraacyldisaccharide 1-phosphate intermediate (termed DS-1-P) to form tetraacyldisaccharide 1,4'-bis-phosphate (lipid IVA). This chain is Tetraacyldisaccharide 4'-kinase, found in Methylobacterium sp. (strain 4-46).